Reading from the N-terminus, the 145-residue chain is uncharacterized protein (145 aa).

The protein belongs to the SAP18 family.

The protein localises to the cytoplasm. Its subcellular location is the nucleus. This is an uncharacterized protein from Schizosaccharomyces pombe (strain 972 / ATCC 24843) (Fission yeast).